The primary structure comprises 357 residues: Histidine biosynthesis bifunctional protein HisB (357 aa).

The histidinol-phosphatase stretch occupies residues 1 to 168 (MTPILFIDRD…GIAHALADAP (168 aa)). Catalysis depends on aspartate 8, which acts as the Nucleophile. Mg(2+) contacts are provided by aspartate 8, aspartate 10, and aspartate 128. Aspartate 10 serves as the catalytic Proton donor. Residues 169 to 357 (RTAVVQRDTK…TALPSTKGAL (189 aa)) are imidazoleglycerol-phosphate dehydratase.

This sequence in the N-terminal section; belongs to the histidinol-phosphatase family. The protein in the C-terminal section; belongs to the imidazoleglycerol-phosphate dehydratase family. It depends on Mg(2+) as a cofactor.

The protein resides in the cytoplasm. It catalyses the reaction D-erythro-1-(imidazol-4-yl)glycerol 3-phosphate = 3-(imidazol-4-yl)-2-oxopropyl phosphate + H2O. It carries out the reaction L-histidinol phosphate + H2O = L-histidinol + phosphate. It participates in amino-acid biosynthesis; L-histidine biosynthesis; L-histidine from 5-phospho-alpha-D-ribose 1-diphosphate: step 6/9. The protein operates within amino-acid biosynthesis; L-histidine biosynthesis; L-histidine from 5-phospho-alpha-D-ribose 1-diphosphate: step 8/9. In Stenotrophomonas maltophilia (strain K279a), this protein is Histidine biosynthesis bifunctional protein HisB.